A 368-amino-acid chain; its full sequence is tRNA/tmRNA (uracil-C(5))-methyltransferase (368 aa).

S-adenosyl-L-methionine is bound by residues Q190, Y218, N223, E239, and D301. The active-site Nucleophile is C326. Residue E360 is the Proton acceptor of the active site.

This sequence belongs to the class I-like SAM-binding methyltransferase superfamily. RNA M5U methyltransferase family. TrmA subfamily.

It carries out the reaction uridine(54) in tRNA + S-adenosyl-L-methionine = 5-methyluridine(54) in tRNA + S-adenosyl-L-homocysteine + H(+). The catalysed reaction is uridine(341) in tmRNA + S-adenosyl-L-methionine = 5-methyluridine(341) in tmRNA + S-adenosyl-L-homocysteine + H(+). In terms of biological role, dual-specificity methyltransferase that catalyzes the formation of 5-methyluridine at position 54 (m5U54) in all tRNAs, and that of position 341 (m5U341) in tmRNA (transfer-mRNA). In Photobacterium profundum (strain SS9), this protein is tRNA/tmRNA (uracil-C(5))-methyltransferase.